The sequence spans 476 residues: Cardiolipin synthase (476 aa).

Helical transmembrane passes span 2 to 22 and 31 to 51; these read HLLI…IIFI and WAWI…YILF. 2 consecutive PLD phosphodiesterase domains span residues 207–234 and 389–416; these read INYR…GDEY and EKGF…DIRS. Catalysis depends on residues His-212, Lys-214, Asp-219, His-394, Lys-396, and Asp-401.

Belongs to the phospholipase D family. Cardiolipin synthase subfamily.

It is found in the cell membrane. It carries out the reaction 2 a 1,2-diacyl-sn-glycero-3-phospho-(1'-sn-glycerol) = a cardiolipin + glycerol. Its function is as follows. Catalyzes the reversible phosphatidyl group transfer from one phosphatidylglycerol molecule to another to form cardiolipin (CL) (diphosphatidylglycerol) and glycerol. The protein is Cardiolipin synthase (cls) of Clostridium perfringens (strain SM101 / Type A).